Reading from the N-terminus, the 312-residue chain is Elongation factor Ts (312 aa).

Residues 80 to 83 (TDFV) form an involved in Mg(2+) ion dislocation from EF-Tu region.

The protein belongs to the EF-Ts family.

The protein resides in the cytoplasm. In terms of biological role, associates with the EF-Tu.GDP complex and induces the exchange of GDP to GTP. It remains bound to the aminoacyl-tRNA.EF-Tu.GTP complex up to the GTP hydrolysis stage on the ribosome. This chain is Elongation factor Ts, found in Maricaulis maris (strain MCS10) (Caulobacter maris).